The chain runs to 459 residues: Ribulose bisphosphate carboxylase large chain (459 aa).

Position 4 is an N6,N6,N6-trimethyllysine (Lys4). Substrate is bound by residues Asn113 and Thr163. Lys165 serves as the catalytic Proton acceptor. Lys167 is a binding site for substrate. Positions 191, 193, and 194 each coordinate Mg(2+). Lys191 bears the N6-carboxylysine mark. His284 acts as the Proton acceptor in catalysis. The substrate site is built by Arg285, His317, and Ser369.

This sequence belongs to the RuBisCO large chain family. Type I subfamily. Heterohexadecamer of 8 large chains and 8 small chains; disulfide-linked. The disulfide link is formed within the large subunit homodimers. The cofactor is Mg(2+). Post-translationally, the disulfide bond which can form in the large chain dimeric partners within the hexadecamer appears to be associated with oxidative stress and protein turnover.

It is found in the plastid. The protein localises to the chloroplast. The enzyme catalyses 2 (2R)-3-phosphoglycerate + 2 H(+) = D-ribulose 1,5-bisphosphate + CO2 + H2O. The catalysed reaction is D-ribulose 1,5-bisphosphate + O2 = 2-phosphoglycolate + (2R)-3-phosphoglycerate + 2 H(+). Functionally, ruBisCO catalyzes two reactions: the carboxylation of D-ribulose 1,5-bisphosphate, the primary event in carbon dioxide fixation, as well as the oxidative fragmentation of the pentose substrate in the photorespiration process. Both reactions occur simultaneously and in competition at the same active site. This chain is Ribulose bisphosphate carboxylase large chain, found in Roridula gorgonias (South African fly bush).